A 209-amino-acid polypeptide reads, in one-letter code: UPF0174 protein jhp_1493 (209 aa).

The protein belongs to the UPF0174 family.

In Helicobacter pylori (strain J99 / ATCC 700824) (Campylobacter pylori J99), this protein is UPF0174 protein jhp_1493.